The sequence spans 319 residues: tRNA dimethylallyltransferase (319 aa).

Position 10-17 (10-17 (GPTAVGKT)) interacts with ATP. 12-17 (TAVGKT) is a binding site for substrate. An interaction with substrate tRNA region spans residues 35–38 (DSMQ).

This sequence belongs to the IPP transferase family. Monomer. The cofactor is Mg(2+).

The catalysed reaction is adenosine(37) in tRNA + dimethylallyl diphosphate = N(6)-dimethylallyladenosine(37) in tRNA + diphosphate. Its function is as follows. Catalyzes the transfer of a dimethylallyl group onto the adenine at position 37 in tRNAs that read codons beginning with uridine, leading to the formation of N6-(dimethylallyl)adenosine (i(6)A). The chain is tRNA dimethylallyltransferase from Symbiobacterium thermophilum (strain DSM 24528 / JCM 14929 / IAM 14863 / T).